The chain runs to 94 residues: uncharacterized protein (94 aa).

Residues 1-26 form the signal peptide; sequence MNDQRDQAVPWATGLAVAGFVAAVIA. 2 helical membrane-spanning segments follow: residues 42 to 62 and 71 to 91; these read LLAVGLNIVAVSGLAPTLWGW and FVLGAAVGVAGAWLALLALTL.

It is found in the cell membrane. This is an uncharacterized protein from Mycobacterium tuberculosis (strain CDC 1551 / Oshkosh).